A 748-amino-acid chain; its full sequence is Bifunctional lysine-specific demethylase and histidyl-hydroxylase NO66 (748 aa).

Disordered regions lie at residues 65–135 (NIDR…RSTY) and 160–264 (TEVV…DDEG). The span at 94–110 (LENKKPKVEVKKEDEKS) shows a compositional bias: basic and acidic residues. Residues 124-134 (LVQNETSTRST) show a composition bias toward polar residues. Acidic residues predominate over residues 163 to 193 (VESDDEQMIGLDSDEELEDEDETDIDEDEMM). A compositionally biased stretch (basic and acidic residues) spans 194–203 (IDPKDIERYI). The segment covering 207-264 (SVEDEEDMEDEEIEDEEFEDEEFEDEEEEADEQEEEEEDVSDEESVVSEMDADSDDEG) has biased composition (acidic residues). The 145-residue stretch at 399–543 (QLVNPQTYDD…NLMEKVVPEA (145 aa)) folds into the JmjC domain. Residues His442, Asp444, and His509 each contribute to the Fe cation site.

This sequence belongs to the ROX family. NO66 subfamily. Fe(2+) serves as cofactor.

It localises to the nucleus. The catalysed reaction is N(6),N(6)-dimethyl-L-lysyl(36)-[histone H3] + 2 2-oxoglutarate + 2 O2 = L-lysyl(36)-[histone H3] + 2 formaldehyde + 2 succinate + 2 CO2. Functionally, oxygenase that can act as both a histone lysine demethylase and a ribosomal histidine hydroxylase. Specifically demethylates 'Lys-4' (H3K4me) and 'Lys-36' (H3K36me) of histone H3, thereby playing a central role in histone code. Mediates response to multiple stress stimuli, including heat shock and osmotic, oxidative, and ethanol stress. The polypeptide is Bifunctional lysine-specific demethylase and histidyl-hydroxylase NO66 (jmjc-1) (Caenorhabditis elegans).